The sequence spans 138 residues: Large ribosomal subunit protein uL16 (138 aa).

Residues 1 to 16 (MLIPRRVKHRKQHHPG) show a composition bias toward basic residues. The interval 1-24 (MLIPRRVKHRKQHHPGRSGAATGG) is disordered.

It belongs to the universal ribosomal protein uL16 family. In terms of assembly, part of the 50S ribosomal subunit.

Functionally, binds 23S rRNA and is also seen to make contacts with the A and possibly P site tRNAs. The sequence is that of Large ribosomal subunit protein uL16 from Paenarthrobacter aurescens (strain TC1).